We begin with the raw amino-acid sequence, 431 residues long: Protein EARLY STARVATION 1, chloroplastic (431 aa).

Residues methionine 1–glycine 19 constitute a chloroplast transit peptide. Disordered regions lie at residues glycine 65 to isoleucine 126 and glycine 403 to glutamate 431. The segment covering proline 415 to glutamate 431 has biased composition (pro residues).

The protein belongs to the ESV1 family.

It is found in the plastid. It localises to the chloroplast stroma. Binds preferentially to highly ordered alpha-glucans, such as starch and crystalline maltodextrins. Involved in the organization of the starch granule matrix, thus influencing starch turnover by modulating the accessibility of starch polymers to modifying and degrading enzymes. Required for the control of starch degradation in leaves and starch distribution in nonphotosynthetic parts. Promotes gravitropic responses, negative in shoots but positive in roots, by facilitating starch granules (statoliths) formation in hypocotyls and roots columella. Facilitates tight packing of starch granules in grains. The chain is Protein EARLY STARVATION 1, chloroplastic from Oryza sativa subsp. japonica (Rice).